The primary structure comprises 240 residues: UDP-2,3-diacylglucosamine hydrolase (240 aa).

Mn(2+) is bound by residues Asp-9, His-11, Asp-43, Asn-81, and His-116. Position 81-82 (81-82 (NR)) interacts with substrate. Positions 124, 162, 166, 169, and 197 each coordinate substrate. His-197 and His-199 together coordinate Mn(2+).

This sequence belongs to the LpxH family. Mn(2+) is required as a cofactor.

It is found in the cell inner membrane. It carries out the reaction UDP-2-N,3-O-bis[(3R)-3-hydroxytetradecanoyl]-alpha-D-glucosamine + H2O = 2-N,3-O-bis[(3R)-3-hydroxytetradecanoyl]-alpha-D-glucosaminyl 1-phosphate + UMP + 2 H(+). The protein operates within glycolipid biosynthesis; lipid IV(A) biosynthesis; lipid IV(A) from (3R)-3-hydroxytetradecanoyl-[acyl-carrier-protein] and UDP-N-acetyl-alpha-D-glucosamine: step 4/6. Functionally, hydrolyzes the pyrophosphate bond of UDP-2,3-diacylglucosamine to yield 2,3-diacylglucosamine 1-phosphate (lipid X) and UMP by catalyzing the attack of water at the alpha-P atom. Involved in the biosynthesis of lipid A, a phosphorylated glycolipid that anchors the lipopolysaccharide to the outer membrane of the cell. The protein is UDP-2,3-diacylglucosamine hydrolase of Neisseria meningitidis serogroup C / serotype 2a (strain ATCC 700532 / DSM 15464 / FAM18).